Reading from the N-terminus, the 752-residue chain is MRVDAIAKVTGRARYTDDYVMAGMCYAKYVRSPIAHGYAVSINDEQARSLPGVLAIFTWEDVPDIPFATAGHAWTLDENKRDTADRALLTRHVRHHGDAVAIVVARDELTAEKAAQLVSIEWQELPVITTPEAALAEDAAPIHNGGNLLKQSTMSTGNVQQTIDAADYQVQGHYQTPVIQHCHMESVTSLAWMEDDSRITIVSSTQIPHIVRRVVGQALDIPWSCVRVIKPFVGGGFGNKQDVLEEPMAAFLTSKLGGIPVKVSLSREECFLATRTRHAFTIDGQMGVNRDGTLKGYSLDVLSNTGAYASHGHSIASAGGNKVAYLYPRCAYAYSSKTCYTNLPSAGAMRGYGAPQVVFAVESMLDDAATALGIDPVEIRLRNAAREGDANPLTGKRIYSAGLPECLEKGRKIFEWEKRRAECQNQQGNLRRGVGVACFSYTSNTWPVGVEIAGARLLMNQDGTINVQSGATEIGQGADTVFSQMVAETVGVPVSDVRVISTQDTDVTPFDPGAFASRQSYVAAPALRSAALLLKEKIIAHAAVMLHQSAMNLTLIKGHIVLVERPEEPLMSLKDLAMDAFYHPERGGQLSAESSIKTTTNPPAFGCTFVDLTVDIALCKVTINRILNVHDSGHILNPLLAEGQVHGGMGMGIGWALFEEMIIDAKSGVVRNPNLLDYKMPTMPDLPQLESAFVEINEPQSAYGHKSLGEPPIIPVAAAIRNAVKMATGVAINTLPLTPKRLYEEFHLAGLI.

The Mo-molybdopterin site is built by glutamine 206, phenylalanine 237, arginine 350, and alanine 516.

The protein belongs to the xanthine dehydrogenase family. As to quaternary structure, heterotrimer of XdhA, XdhB and XdhC. It depends on Mo-molybdopterin as a cofactor.

The enzyme catalyses xanthine + NAD(+) + H2O = urate + NADH + H(+). It carries out the reaction hypoxanthine + NAD(+) + H2O = xanthine + NADH + H(+). It participates in purine metabolism; hypoxanthine degradation; urate from hypoxanthine: step 1/2. The protein operates within purine metabolism; hypoxanthine degradation; urate from hypoxanthine: step 2/2. Presumed to be a dehydrogenase, but possibly an oxidase. Participates in limited purine salvage (requires aspartate) but does not support aerobic growth on purines as the sole carbon source (purine catabolism). Deletion results in increased adenine sensitivity, suggesting that this protein contributes to the conversion of adenine to guanine nucleotides during purine salvage. This Escherichia coli (strain K12) protein is Putative xanthine dehydrogenase molybdenum-binding subunit XdhA (xdhA).